The chain runs to 90 residues: Protein S100-A6 (90 aa).

EF-hand domains lie at 12–47 and 48–83; these read LVAI…IGAK and LQDA…LAMI. The Ca(2+) site is built by Thr-28 and Glu-33. N6-acetyllysine is present on Lys-40. Lys-47 carries the post-translational modification N6-acetyllysine; alternate. The residue at position 47 (Lys-47) is an N6-succinyllysine; alternate. Ca(2+)-binding residues include Asp-61, Asn-63, Asp-65, and Glu-72.

The protein belongs to the S-100 family. As to quaternary structure, homodimer; head to tail assembly of 2 subunits. Interacts with CACYBP in a calcium-dependent manner. Interacts with ANXA2 and ANXA11 (via N-terminus). Interacts with SUGT1. Interacts with TP53; has higher affinity for TP53 that is phosphorylated on its N-terminal domain, and lower affinity for TP53 that is phosphorylated on its C-terminal domain. Interacts with tropomyosin. Interacts with FKBP4. Interacts with PPP5C (via TPR repeats); the interaction is calcium-dependent and modulates PPP5C activity. Interacts with TPPP; this interaction inhibits TPPP dimerization.

The protein localises to the nucleus envelope. The protein resides in the cytoplasm. Its subcellular location is the cell membrane. May function as calcium sensor and modulator, contributing to cellular calcium signaling. May function by interacting with other proteins, such as TPR-containing proteins, and indirectly play a role in many physiological processes such as the reorganization of the actin cytoskeleton and in cell motility. Binds 2 calcium ions. Calcium binding is cooperative. This Sus scrofa (Pig) protein is Protein S100-A6 (S100A6).